The following is a 308-amino-acid chain: Protein translocase subunit SecF (308 aa).

A run of 6 helical transmembrane segments spans residues 23–42, 140–160, 164–184, 194–214, 246–266, and 272–292; these read VSYSFSIILSLISLIWIGIY, IEAGAMAMLFSFLAIMVYIGV, WYFGFGILIALVHDVILALGF, LSTIAAVLTIIGYSVNDSVVI, ILTVITTLLANLALILFGGKA, and VLVFFGIIAGTYSSIFISAPI.

The protein belongs to the SecD/SecF family. SecF subfamily. Forms a complex with SecD. Part of the essential Sec protein translocation apparatus which comprises SecA, SecYEG and auxiliary proteins SecDF-YajC and YidC.

It localises to the cell inner membrane. Its function is as follows. Part of the Sec protein translocase complex. Interacts with the SecYEG preprotein conducting channel. SecDF uses the proton motive force (PMF) to complete protein translocation after the ATP-dependent function of SecA. The polypeptide is Protein translocase subunit SecF (Rickettsia typhi (strain ATCC VR-144 / Wilmington)).